The primary structure comprises 236 residues: MTRRYWNINLKEMIEAGVHFGHGIKKWNPKMAPYISAKRKGTHITNLARTARFLSEACDLVFDAASQGKSFLIVGTKKRAADLVASAAIRSRCHYVNKKWFSGMLTNWSITKTRLSQFRDLRAEEKMGKFHHLPKRDAAILKRKLSTLQRYLGGIKYMTRLPDIVIVLDQQKEYIALQECAILGIPTISLVDTNCDPDLANISIPANDDTMTSIRLILNKLVFAISEGRSLYIRNR.

Belongs to the universal ribosomal protein uS2 family.

Its subcellular location is the plastid. The protein resides in the chloroplast. In Zea mays (Maize), this protein is Small ribosomal subunit protein uS2c (rps2).